A 210-amino-acid chain; its full sequence is Chaperone protein TorD (210 aa).

It belongs to the TorD/DmsD family. TorD subfamily.

The protein localises to the cytoplasm. Involved in the biogenesis of TorA. Acts on TorA before the insertion of the molybdenum cofactor and, as a result, probably favors a conformation of the apoenzyme that is competent for acquiring the cofactor. In Salmonella dublin (strain CT_02021853), this protein is Chaperone protein TorD.